Reading from the N-terminus, the 349-residue chain is Phosphorylcholine phosphatase (349 aa).

Residues 1–22 (MTFAKGILAALALAAAVGQASA) form the signal peptide. Aspartate 53 functions as the Nucleophile in the catalytic mechanism. Mg(2+)-binding residues include aspartate 53 and aspartate 55. Residue aspartate 55 is the Proton donor of the active site. A disulfide bridge links cysteine 109 with cysteine 116. Mg(2+) is bound at residue aspartate 284.

This sequence belongs to the HAD-like hydrolase superfamily. Monomer. Homodimer. Homotetramer. Mg(2+) is required as a cofactor.

Its subcellular location is the periplasm. It catalyses the reaction phosphocholine + H2O = choline + phosphate. It carries out the reaction phosphoethanolamine + H2O = ethanolamine + phosphate. Activity is inhibited by high concentrations of phosphorylcholine, phosphorylethanolamine, choline or betaine. Displays different properties depending on the substrate utilized, the pH conditions as well as the presence or absence of metal ions. At pH 5, activity is inhibited by Al(3+) ions. At pH 7.4, the enzyme cannot catalyze the hydrolysis of pNPP, phosphorylethanolamine is a poor substrate in either the presence or absence of divalent cations, and activity measured with phosphorylcholine is independent of divalent cations or is not inhibited by Al(3+) ions. Mg(2+) produces identical activation at pH 5.0 and 7.4, but Zn(2+) is an activator at pH 5.0 and becomes an inhibitor at pH 7.4. This inhibition at pH 7.4 may be due to a transition from octahedral to tetrahedral coordination geometry, which is produced by hydrolysis of the Zn-hexacoordinated complex. In terms of biological role, catalyzes the hydrolysis of phosphorylcholine (PCho) to produce choline and inorganic phosphate. Can also hydrolyze phosphorylethanolamine and the nonphysiological substrate p-nitrophenylphosphate (pNPP). Shows higher affinity and catalytic efficiency with phosphorylcholine as substrate. Its function is as follows. Is probably involved in virulence. The bacteria may break down various host compounds or host cell membranes through the coordinated action of phospholipase C and phosphocholine phosphatase. The final consequence of the action of these enzymes is an increase of the free choline concentration, which may promote the pathogenicity of P.aeruginosa. The sequence is that of Phosphorylcholine phosphatase from Pseudomonas aeruginosa (strain ATCC 15692 / DSM 22644 / CIP 104116 / JCM 14847 / LMG 12228 / 1C / PRS 101 / PAO1).